The sequence spans 267 residues: Actin maturation protease (267 aa).

Positions 1–32 (MSNISSVAPPPPPPPMIVTPSTPATTKERPVG) are disordered. Positions 8–17 (APPPPPPPMI) are enriched in pro residues. A peptidase C39-like region spans residues 74-188 (SIVQVGPTCG…WALIVGYLVD (115 aa)). Cys82 is an active-site residue.

The protein belongs to the ACTMAP family.

The enzyme catalyses N-terminal N(alpha)-acetyl-L-cysteinyl-L-aspartyl-[protein] + H2O = N-terminal L-aspartyl-[protein] + N-acetyl-L-cysteine. Functionally, actin maturation protease that specifically mediates the cleavage of immature acetylated N-terminal actin, thereby contributing to actin maturation. This chain is Actin maturation protease, found in Drosophila melanogaster (Fruit fly).